The following is a 55-amino-acid chain: Large ribosomal subunit protein bL33 (55 aa).

It belongs to the bacterial ribosomal protein bL33 family.

This chain is Large ribosomal subunit protein bL33, found in Acidiphilium cryptum (strain JF-5).